A 486-amino-acid polypeptide reads, in one-letter code: 23S rRNA (uracil(1939)-C(5))-methyltransferase RlmD (486 aa).

In terms of domain architecture, TRAM spans 14–76 (AAQDGSGLPE…NHWEQANLTA (63 aa)). 4 residues coordinate [4Fe-4S] cluster: cysteine 89, cysteine 99, cysteine 102, and cysteine 181. Residues glutamine 289, phenylalanine 318, asparagine 323, glutamate 339, asparagine 374, and aspartate 395 each coordinate S-adenosyl-L-methionine. Cysteine 442 acts as the Nucleophile in catalysis.

Belongs to the class I-like SAM-binding methyltransferase superfamily. RNA M5U methyltransferase family. RlmD subfamily.

It carries out the reaction uridine(1939) in 23S rRNA + S-adenosyl-L-methionine = 5-methyluridine(1939) in 23S rRNA + S-adenosyl-L-homocysteine + H(+). Functionally, catalyzes the formation of 5-methyl-uridine at position 1939 (m5U1939) in 23S rRNA. In Verminephrobacter eiseniae (strain EF01-2), this protein is 23S rRNA (uracil(1939)-C(5))-methyltransferase RlmD.